Here is a 417-residue protein sequence, read N- to C-terminus: NADH-quinone oxidoreductase subunit D (417 aa).

The protein belongs to the complex I 49 kDa subunit family. NDH-1 is composed of 14 different subunits. Subunits NuoB, C, D, E, F, and G constitute the peripheral sector of the complex.

The protein localises to the cell inner membrane. It carries out the reaction a quinone + NADH + 5 H(+)(in) = a quinol + NAD(+) + 4 H(+)(out). Functionally, NDH-1 shuttles electrons from NADH, via FMN and iron-sulfur (Fe-S) centers, to quinones in the respiratory chain. The immediate electron acceptor for the enzyme in this species is believed to be ubiquinone. Couples the redox reaction to proton translocation (for every two electrons transferred, four hydrogen ions are translocated across the cytoplasmic membrane), and thus conserves the redox energy in a proton gradient. The sequence is that of NADH-quinone oxidoreductase subunit D from Nitrosomonas eutropha (strain DSM 101675 / C91 / Nm57).